Consider the following 337-residue polypeptide: Ferrochelatase (337 aa).

Residues H189 and E293 each coordinate Fe cation.

The protein belongs to the ferrochelatase family.

It is found in the cytoplasm. It catalyses the reaction heme b + 2 H(+) = protoporphyrin IX + Fe(2+). It participates in porphyrin-containing compound metabolism; protoheme biosynthesis; protoheme from protoporphyrin-IX: step 1/1. Catalyzes the ferrous insertion into protoporphyrin IX. This Pseudomonas putida (strain W619) protein is Ferrochelatase.